The following is a 1222-amino-acid chain: Deubiquitinating protein VCPIP1 (1222 aa).

Over residues 1–21 (MSQPPPPPPPLPPPPPPPEAP) the composition is skewed to pro residues. A disordered region spans residues 1–36 (MSQPPPPPPPLPPPPPPPEAPQTPSSLASAAASGGL). Residues 25–36 (SSLASAAASGGL) are compositionally biased toward low complexity. An OTU domain is found at 208-361 (LIPVHVDGDG…RNHYIPLVGI (154 aa)). Asp216 is a catalytic residue. The active-site Nucleophile is the Cys219. Residue His354 is part of the active site. N6-acetyllysine is present on Lys408. Disordered regions lie at residues 725–776 (SVMQ…KEKK), 989–1009 (EATT…LGSG), and 1024–1074 (AFQG…VFTA). Residues Ser747 and Ser757 each carry the phosphoserine modification. Low complexity predominate over residues 755–771 (PSSAPATPTKAPYSPTT). Residue Thr763 is modified to Phosphothreonine. 3 positions are modified to phosphoserine: Ser768, Ser994, and Ser998. Over residues 1041 to 1050 (LDPRARETSV) the composition is skewed to basic and acidic residues. Residues 1057-1074 (GTDFSNSSTKTEPSVFTA) are compositionally biased toward polar residues. Ser1077 is modified (phosphoserine). Disordered stretches follow at residues 1113 to 1175 (VSSI…TETT) and 1188 to 1222 (ATRS…MDHS). Residues 1143 to 1157 (VVSSSAKSGSLQTGL) show a composition bias toward polar residues. Residues 1163–1175 (LTGGTENLNTETT) show a composition bias toward low complexity. A Phosphoserine modification is found at Ser1198. Over residues 1200 to 1209 (EELEEMDSQD) the composition is skewed to acidic residues. Residue Ser1207 is modified to Phosphoserine; by ATM. A compositionally biased stretch (polar residues) spans 1210–1222 (AEMTNTTEPMDHS).

In terms of assembly, binds VCP and the ternary complex containing STX5A, NSFL1C and VCP. Post-translationally, phosphorylated at Ser-1207 by ATM or ATR following induction of covalent DNA-protein cross-links (DPCs).

Its subcellular location is the nucleus. The protein localises to the cytoplasm. It localises to the endoplasmic reticulum. It is found in the golgi apparatus. The protein resides in the golgi stack. The catalysed reaction is Thiol-dependent hydrolysis of ester, thioester, amide, peptide and isopeptide bonds formed by the C-terminal Gly of ubiquitin (a 76-residue protein attached to proteins as an intracellular targeting signal).. Deubiquitinating enzyme involved in DNA repair and reassembly of the Golgi apparatus and the endoplasmic reticulum following mitosis. Necessary for VCP-mediated reassembly of Golgi stacks after mitosis. Plays a role in VCP-mediated formation of transitional endoplasmic reticulum (tER). Mediates dissociation of the ternary complex containing STX5A, NSFL1C and VCP. Also involved in DNA repair following phosphorylation by ATM or ATR: acts by catalyzing deubiquitination of SPRTN, thereby promoting SPRTN recruitment to chromatin and subsequent proteolytic cleavage of covalent DNA-protein cross-links (DPCs). Hydrolyzes 'Lys-11'- and 'Lys-48'-linked polyubiquitin chains. Its function is as follows. (Microbial infection) Regulates the duration of C.botulinum neurotoxin type A (BoNT/A) intoxication by catalyzing deubiquitination of Botulinum neurotoxin A light chain (LC), thereby preventing LC degradation by the proteasome, and accelerating botulinum neurotoxin intoxication in patients. The chain is Deubiquitinating protein VCPIP1 from Homo sapiens (Human).